A 179-amino-acid polypeptide reads, in one-letter code: Ribosome maturation factor RimM (179 aa).

One can recognise a PRC barrel domain in the interval 100 to 176; it reads KEEFHLLELI…FLIINPPNGL (77 aa).

This sequence belongs to the RimM family. Binds ribosomal protein uS19.

The protein localises to the cytoplasm. Functionally, an accessory protein needed during the final step in the assembly of 30S ribosomal subunit, possibly for assembly of the head region. Essential for efficient processing of 16S rRNA. May be needed both before and after RbfA during the maturation of 16S rRNA. It has affinity for free ribosomal 30S subunits but not for 70S ribosomes. The sequence is that of Ribosome maturation factor RimM from Prochlorococcus marinus (strain MIT 9312).